The chain runs to 555 residues: MTHLSDLDIANQATIKPISEIAEKIGIPEDALEQYGHYKAKIDINKLDDKGDRGKVVLVTAMSPTPAGEGKSTVTVGLADAFHELGENVMMALREPALGPVFGIKGGATGGGYAQVLPMEDINLHFNGDFHAITTANNALAAFIDNHIHQGNELGIDQRRIEWKRVLDMNDRELRKVVVGLGGPTQGVPREDGFNITVASEIMTILCLSTGLKDLKASIANITIGYTRDRKPVTVADLKVEGALAMILKDAIKPNLVQSIEGTPALIHGGPFANIAHGCNSIIATETARKLADIVVTEAGFGSDLGAEKFMNIKARKAGFEPSAAVVVATIRALKMHGGVAKDDLKEENVQAVRDGLANLERHIENIRSFGVEPVVALNAFVSDTEAEEQVVEDWAKEHGVRIALTEVWEKGGKGGVELAKQVQEVLNEKHDFKHTYDLDLPIEEKIEKVVTNIYGGNKVTFTSGALKQLKQIKENGWDNYPVCMAKTQYSFTDDKDRLGAPDDFEITIRELQPKTGAGFIVALTGAIMTMPGLPKKPAALNMDVTEDGHAKGLF.

Position 65–72 (65–72 (TPAGEGKS)) interacts with ATP.

This sequence belongs to the formate--tetrahydrofolate ligase family.

The enzyme catalyses (6S)-5,6,7,8-tetrahydrofolate + formate + ATP = (6R)-10-formyltetrahydrofolate + ADP + phosphate. Its pathway is one-carbon metabolism; tetrahydrofolate interconversion. The polypeptide is Formate--tetrahydrofolate ligase (Staphylococcus carnosus (strain TM300)).